The following is a 548-amino-acid chain: Chaperonin GroEL (548 aa).

ATP-binding positions include 30 to 33 (TLGP), lysine 51, 87 to 91 (DGTTT), glycine 415, 479 to 481 (NAA), and aspartate 495.

It belongs to the chaperonin (HSP60) family. Forms a cylinder of 14 subunits composed of two heptameric rings stacked back-to-back. Interacts with the co-chaperonin GroES.

The protein localises to the cytoplasm. The enzyme catalyses ATP + H2O + a folded polypeptide = ADP + phosphate + an unfolded polypeptide.. In terms of biological role, together with its co-chaperonin GroES, plays an essential role in assisting protein folding. The GroEL-GroES system forms a nano-cage that allows encapsulation of the non-native substrate proteins and provides a physical environment optimized to promote and accelerate protein folding. The chain is Chaperonin GroEL from Nitratidesulfovibrio vulgaris (strain DSM 19637 / Miyazaki F) (Desulfovibrio vulgaris).